Here is a 196-residue protein sequence, read N- to C-terminus: ATP-dependent Clp protease proteolytic subunit (196 aa).

S101 functions as the Nucleophile in the catalytic mechanism. The active site involves H126.

Belongs to the peptidase S14 family. In terms of assembly, component of the chloroplastic Clp protease core complex.

The protein localises to the plastid. The protein resides in the chloroplast stroma. The catalysed reaction is Hydrolysis of proteins to small peptides in the presence of ATP and magnesium. alpha-casein is the usual test substrate. In the absence of ATP, only oligopeptides shorter than five residues are hydrolyzed (such as succinyl-Leu-Tyr-|-NHMec, and Leu-Tyr-Leu-|-Tyr-Trp, in which cleavage of the -Tyr-|-Leu- and -Tyr-|-Trp bonds also occurs).. Cleaves peptides in various proteins in a process that requires ATP hydrolysis. Has a chymotrypsin-like activity. Plays a major role in the degradation of misfolded proteins. In Lactuca sativa (Garden lettuce), this protein is ATP-dependent Clp protease proteolytic subunit.